The sequence spans 277 residues: 4-hydroxy-3-methylbut-2-enyl diphosphate reductase (277 aa).

A [4Fe-4S] cluster-binding site is contributed by Cys12. The (2E)-4-hydroxy-3-methylbut-2-enyl diphosphate site is built by His36 and His70. Residues His36 and His70 each contribute to the dimethylallyl diphosphate site. Isopentenyl diphosphate contacts are provided by His36 and His70. Cys92 is a [4Fe-4S] cluster binding site. Position 120 (His120) interacts with (2E)-4-hydroxy-3-methylbut-2-enyl diphosphate. His120 lines the dimethylallyl diphosphate pocket. His120 lines the isopentenyl diphosphate pocket. Glu122 (proton donor) is an active-site residue. Thr158 lines the (2E)-4-hydroxy-3-methylbut-2-enyl diphosphate pocket. Cys186 is a [4Fe-4S] cluster binding site. Residues Ser214, Asn216, and Ser258 each contribute to the (2E)-4-hydroxy-3-methylbut-2-enyl diphosphate site. Dimethylallyl diphosphate is bound by residues Ser214, Asn216, and Ser258. 3 residues coordinate isopentenyl diphosphate: Ser214, Asn216, and Ser258.

Belongs to the IspH family. It depends on [4Fe-4S] cluster as a cofactor.

The catalysed reaction is isopentenyl diphosphate + 2 oxidized [2Fe-2S]-[ferredoxin] + H2O = (2E)-4-hydroxy-3-methylbut-2-enyl diphosphate + 2 reduced [2Fe-2S]-[ferredoxin] + 2 H(+). It catalyses the reaction dimethylallyl diphosphate + 2 oxidized [2Fe-2S]-[ferredoxin] + H2O = (2E)-4-hydroxy-3-methylbut-2-enyl diphosphate + 2 reduced [2Fe-2S]-[ferredoxin] + 2 H(+). Its pathway is isoprenoid biosynthesis; dimethylallyl diphosphate biosynthesis; dimethylallyl diphosphate from (2E)-4-hydroxy-3-methylbutenyl diphosphate: step 1/1. It participates in isoprenoid biosynthesis; isopentenyl diphosphate biosynthesis via DXP pathway; isopentenyl diphosphate from 1-deoxy-D-xylulose 5-phosphate: step 6/6. Functionally, catalyzes the conversion of 1-hydroxy-2-methyl-2-(E)-butenyl 4-diphosphate (HMBPP) into a mixture of isopentenyl diphosphate (IPP) and dimethylallyl diphosphate (DMAPP). Acts in the terminal step of the DOXP/MEP pathway for isoprenoid precursor biosynthesis. This Campylobacter jejuni subsp. jejuni serotype O:6 (strain 81116 / NCTC 11828) protein is 4-hydroxy-3-methylbut-2-enyl diphosphate reductase.